Consider the following 1412-residue polypeptide: DNA-directed RNA polymerase subunit beta' (1412 aa).

Residues Asp543, Asp545, and Asp547 each coordinate Mg(2+). 4 residues coordinate Zn(2+): Cys1017, Cys1092, Cys1099, and Cys1102.

This sequence belongs to the RNA polymerase beta' chain family. In terms of assembly, the RNAP catalytic core consists of 2 alpha, 1 beta, 1 beta' and 1 omega subunit. When a sigma factor is associated with the core the holoenzyme is formed, which can initiate transcription. The cofactor is Mg(2+). Zn(2+) is required as a cofactor.

It carries out the reaction RNA(n) + a ribonucleoside 5'-triphosphate = RNA(n+1) + diphosphate. Its function is as follows. DNA-dependent RNA polymerase catalyzes the transcription of DNA into RNA using the four ribonucleoside triphosphates as substrates. The chain is DNA-directed RNA polymerase subunit beta' from Mesomycoplasma hyopneumoniae (strain 7448) (Mycoplasma hyopneumoniae).